The sequence spans 263 residues: MSDLISALLLGILEGLTEFLPISSTGHLLIAEQWLGRRSDFFNIVIQAGAILAICLALRQKLWTLATGLGERANRDYVLKIGVAFLVTAVVGLIVRKAGWQLPETIQPVAWALLIGGVWMLVAEHFAGKLPERDVVTWKVAIAVGLAQVVAGVFPGTSRSASAIFLAMLLGLSKRSAAADFVFMVGIPTMFAASGYALLEMYKEGGFGSENWTDVSVAFIAATLTGFVVVKWLLGYIKKHRFTVFAVYRILLGAALLLWLPAA.

7 helical membrane-spanning segments follow: residues 38 to 58, 75 to 95, 108 to 128, 135 to 155, 181 to 201, 217 to 237, and 242 to 262; these read RSDFFNIVIQAGAILAICLAL, RDYVLKIGVAFLVTAVVGLIV, PVAWALLIGGVWMLVAEHFAG, VVTWKVAIAVGLAQVVAGVFP, FVFMVGIPTMFAASGYALLEM, VAFIAATLTGFVVVKWLLGYI, and FTVFAVYRILLGAALLLWLPA.

This sequence belongs to the UppP family.

Its subcellular location is the cell inner membrane. It carries out the reaction di-trans,octa-cis-undecaprenyl diphosphate + H2O = di-trans,octa-cis-undecaprenyl phosphate + phosphate + H(+). Catalyzes the dephosphorylation of undecaprenyl diphosphate (UPP). Confers resistance to bacitracin. This is Undecaprenyl-diphosphatase from Xanthomonas campestris pv. campestris (strain 8004).